We begin with the raw amino-acid sequence, 248 residues long: Isoprenyl transferase (248 aa).

Residue aspartate 23 is part of the active site. Aspartate 23 lines the Mg(2+) pocket. Residues 24–27 (GNGR), tryptophan 28, arginine 36, histidine 40, and 68–70 (STE) contribute to the substrate site. Asparagine 71 serves as the catalytic Proton acceptor. Substrate is bound by residues tryptophan 72, arginine 74, arginine 185, and 191-193 (RIS). Glutamate 204 is a Mg(2+) binding site.

This sequence belongs to the UPP synthase family. As to quaternary structure, homodimer. The cofactor is Mg(2+).

Functionally, catalyzes the condensation of isopentenyl diphosphate (IPP) with allylic pyrophosphates generating different type of terpenoids. This Neisseria gonorrhoeae (strain ATCC 700825 / FA 1090) protein is Isoprenyl transferase.